We begin with the raw amino-acid sequence, 425 residues long: Argininosuccinate synthase (425 aa).

Residues 7–15 (AYSGGLDTS) and Ala33 contribute to the ATP site. Position 84 (Tyr84) interacts with L-citrulline. Residue Gly114 participates in ATP binding. Positions 116, 120, and 121 each coordinate L-aspartate. Asn120 is a binding site for L-citrulline. L-citrulline-binding residues include Arg124, Ser177, Ser186, Glu267, and Tyr279.

Belongs to the argininosuccinate synthase family. Type 1 subfamily. In terms of assembly, homotetramer.

It is found in the cytoplasm. The catalysed reaction is L-citrulline + L-aspartate + ATP = 2-(N(omega)-L-arginino)succinate + AMP + diphosphate + H(+). It participates in amino-acid biosynthesis; L-arginine biosynthesis; L-arginine from L-ornithine and carbamoyl phosphate: step 2/3. The sequence is that of Argininosuccinate synthase from Pseudothermotoga lettingae (strain ATCC BAA-301 / DSM 14385 / NBRC 107922 / TMO) (Thermotoga lettingae).